The following is a 210-amino-acid chain: Mating-type-like protein A1 (210 aa).

A DNA-binding region (homeobox) is located at residues 141–200 (SKKKRQRLDNSTKEFLEKVFEKNKQPNRRERELIAEKHGVSLSQIRVWFTNKRMRKKEPK).

Belongs to the MATA1 family. Forms a heterodimer with ALPHA2.

The protein resides in the nucleus. Functionally, mating type proteins are sequence specific DNA-binding proteins that act as master switches in yeast differentiation by controlling gene expression in a cell type-specific fashion. Transcriptional corepressor that acts in conjunction with ALPHA2 to repress transcription both of homozygote-specific genes and of genes necessary for the white-opaque switch, a prerequisite for mating. The sequence is that of Mating-type-like protein A1 (MTLA1) from Candida albicans (strain SC5314 / ATCC MYA-2876) (Yeast).